Reading from the N-terminus, the 398-residue chain is S-adenosylmethionine synthase (398 aa).

His16 provides a ligand contact to ATP. Asp18 contributes to the Mg(2+) binding site. Glu51 contributes to the K(+) binding site. Glu64 and Gln108 together coordinate L-methionine. Positions 108–118 are flexible loop; it reads QSADIAQGVDA. Residues 176–178, 242–243, Asp251, 257–258, Ala274, and Lys278 each bind ATP; these read DSK, KF, and RK. Asp251 provides a ligand contact to L-methionine. Residue Lys282 coordinates L-methionine.

Belongs to the AdoMet synthase family. Homotetramer; dimer of dimers. Requires Mg(2+) as cofactor. It depends on K(+) as a cofactor.

It is found in the cytoplasm. The catalysed reaction is L-methionine + ATP + H2O = S-adenosyl-L-methionine + phosphate + diphosphate. It participates in amino-acid biosynthesis; S-adenosyl-L-methionine biosynthesis; S-adenosyl-L-methionine from L-methionine: step 1/1. Functionally, catalyzes the formation of S-adenosylmethionine (AdoMet) from methionine and ATP. The overall synthetic reaction is composed of two sequential steps, AdoMet formation and the subsequent tripolyphosphate hydrolysis which occurs prior to release of AdoMet from the enzyme. In Rhodopseudomonas palustris (strain BisB5), this protein is S-adenosylmethionine synthase.